The chain runs to 534 residues: MDSDSPILPLSNNPPAARTHDHSQRNNHARHVSSSGTTLFAPVKPATKKYNYRRVSPHGSYISPLEAMTVKLADTYSICNPKFQFSSEQNPRRPLTKPSEGVHNHGFDNVNHDYVLYVNDLLGTDEGRKYLILDTLGHGTFGQVARCQDLKTQQIVAIKVIKNKPAFYNQCVMEVSILELLNNKYDPEDKRHLIRLYDQFMHKNHLCLVFELLSINLYELIKQNQFRGLHLSLVRSFATQLLSCTSLLKQARIIHCDLKPENILLQDLSSPIVKVIDFGSACHERQTVYTYIQSRFYRSPEVILGLHYNCGIDMWSLGCILAELFLGLPLFPGNSEYNQLCRIVDMLGNPPTWMLEMGKNSKKYYNSGFVNGRKTYELKSIEQFSIENNKTEQPGKQYFGEKTLDAIVLNYPRRKTTPKLTPEEHEERLCFIDFIKQFLELNPLKRWTPDQAKNHPFITGASFSQYCIDKQKPLLTTQRTRNRSHTIGNQAVVPPSLQRASTYVSNEPEEFVHTRPLPQYYPPANENENVDEFF.

Positions 1–40 are disordered; it reads MDSDSPILPLSNNPPAARTHDHSQRNNHARHVSSSGTTLF. Residues S33, S56, and S60 each carry the phosphoserine modification. The tract at residues 85 to 104 is disordered; sequence FSSEQNPRRPLTKPSEGVHN. In terms of domain architecture, Protein kinase spans 130 to 458; it reads YLILDTLGHG…PDQAKNHPFI (329 aa). ATP-binding positions include 136–144 and K159; that span reads LGHGTFGQV. D257 (proton acceptor) is an active-site residue. Y291 is subject to Phosphotyrosine.

It belongs to the protein kinase superfamily. Ser/Thr protein kinase family.

The protein resides in the cytoplasm. The protein localises to the cytoskeleton. It is found in the microtubule organizing center. It localises to the spindle pole body. The catalysed reaction is L-seryl-[protein] + ATP = O-phospho-L-seryl-[protein] + ADP + H(+). It carries out the reaction L-threonyl-[protein] + ATP = O-phospho-L-threonyl-[protein] + ADP + H(+). The sequence is that of Serine/threonine-protein kinase ppk15 (ppk15) from Schizosaccharomyces pombe (strain 972 / ATCC 24843) (Fission yeast).